The sequence spans 217 residues: Peroxiredoxin (217 aa).

One can recognise a Thioredoxin domain in the interval 2–159; that stretch reads PVIGEKFPEV…IVRLVKALQV (158 aa). C46 functions as the Cysteine sulfenic acid (-SOH) intermediate in the catalytic mechanism. R122 contributes to the substrate binding site. C206 and C212 form a disulfide bridge.

Belongs to the peroxiredoxin family. Prx6 subfamily. In terms of assembly, homodecamer. Pentamer of dimers that assemble into a ring structure.

The protein resides in the cytoplasm. The enzyme catalyses a hydroperoxide + [thioredoxin]-dithiol = an alcohol + [thioredoxin]-disulfide + H2O. In terms of biological role, thiol-specific peroxidase that catalyzes the reduction of hydrogen peroxide and organic hydroperoxides to water and alcohols, respectively. Plays a role in cell protection against oxidative stress by detoxifying peroxides. The sequence is that of Peroxiredoxin from Methanocaldococcus jannaschii (strain ATCC 43067 / DSM 2661 / JAL-1 / JCM 10045 / NBRC 100440) (Methanococcus jannaschii).